A 360-amino-acid chain; its full sequence is Outer mitochondrial transmembrane helix translocase (360 aa).

At 1–15 (MVHGEAFSRPLSRNE) the chain is on the mitochondrial intermembrane side. A helical transmembrane segment spans residues 16–34 (VVGLIFRLTIFGAVTYFTI). The Cytoplasmic segment spans residues 35–360 (KWMVDAIDPT…QNVLMHVSLD (326 aa)). 133 to 140 (GPPGCGKT) lines the ATP pocket.

It belongs to the AAA ATPase family. MSP1 subfamily.

The protein localises to the mitochondrion outer membrane. It localises to the peroxisome membrane. The protein resides in the postsynaptic cell membrane. The catalysed reaction is [protein]-with a C-terminal TM segment(out) + ATP + H2O = [protein]-with a C-terminal TM segment(in) + ADP + phosphate + H(+). Its function is as follows. Outer mitochondrial translocase required to remove mislocalized tail-anchored transmembrane proteins on mitochondria. Specifically recognizes and binds tail-anchored transmembrane proteins: acts as a dislocase that mediates the ATP-dependent extraction of mistargeted tail-anchored transmembrane proteins from the mitochondrion outer membrane. Also plays a critical role in regulating the surface expression of AMPA receptors (AMPAR), thereby regulating synaptic plasticity and learning and memory. In Xenopus tropicalis (Western clawed frog), this protein is Outer mitochondrial transmembrane helix translocase.